The following is a 78-amino-acid chain: Acyl carrier protein (78 aa).

One can recognise a Carrier domain in the interval serine 2 to serine 77. Serine 37 is modified (O-(pantetheine 4'-phosphoryl)serine).

It belongs to the acyl carrier protein (ACP) family. 4'-phosphopantetheine is transferred from CoA to a specific serine of apo-ACP by AcpS. This modification is essential for activity because fatty acids are bound in thioester linkage to the sulfhydryl of the prosthetic group.

Its subcellular location is the cytoplasm. It participates in lipid metabolism; fatty acid biosynthesis. Carrier of the growing fatty acid chain in fatty acid biosynthesis. This is Acyl carrier protein from Methylorubrum extorquens (strain CM4 / NCIMB 13688) (Methylobacterium extorquens).